We begin with the raw amino-acid sequence, 210 residues long: Probable glutathione S-transferase gst-36 (210 aa).

The 78-residue stretch at 2 to 79 (PHFKFYYFDV…YLGHQFHRAG (78 aa)) folds into the GST N-terminal domain. Glutathione contacts are provided by residues tyrosine 8, tryptophan 39, lysine 43, 49–51 (GQV), and 63–64 (QT). Positions 81–210 (NAVDCARLDM…YVSQRKATPA (130 aa)) constitute a GST C-terminal domain.

Belongs to the GST superfamily. Sigma family.

The enzyme catalyses RX + glutathione = an S-substituted glutathione + a halide anion + H(+). In terms of biological role, conjugation of reduced glutathione to a wide number of exogenous and endogenous hydrophobic electrophiles. This chain is Probable glutathione S-transferase gst-36 (gst-36), found in Caenorhabditis elegans.